The chain runs to 161 residues: Nucleotide-binding protein Gbem_0619 (161 aa).

Belongs to the YajQ family.

Nucleotide-binding protein. The sequence is that of Nucleotide-binding protein Gbem_0619 from Citrifermentans bemidjiense (strain ATCC BAA-1014 / DSM 16622 / JCM 12645 / Bem) (Geobacter bemidjiensis).